The chain runs to 207 residues: Ribosomal RNA small subunit methyltransferase G (207 aa).

Residues glycine 74, leucine 79, 125-126 (VE), and arginine 140 each bind S-adenosyl-L-methionine.

The protein belongs to the methyltransferase superfamily. RNA methyltransferase RsmG family.

Its subcellular location is the cytoplasm. It carries out the reaction guanosine(527) in 16S rRNA + S-adenosyl-L-methionine = N(7)-methylguanosine(527) in 16S rRNA + S-adenosyl-L-homocysteine. Specifically methylates the N7 position of guanine in position 527 of 16S rRNA. The polypeptide is Ribosomal RNA small subunit methyltransferase G (Shewanella loihica (strain ATCC BAA-1088 / PV-4)).